The chain runs to 220 residues: Ribosomal RNA large subunit methyltransferase E (220 aa).

S-adenosyl-L-methionine contacts are provided by G60, W62, D92, D108, and D133. The active-site Proton acceptor is the K173. Residues 195 to 220 (APRKPKASRDKSSETFILGRHLKQPR) are disordered.

The protein belongs to the class I-like SAM-binding methyltransferase superfamily. RNA methyltransferase RlmE family.

Its subcellular location is the cytoplasm. The enzyme catalyses uridine(2552) in 23S rRNA + S-adenosyl-L-methionine = 2'-O-methyluridine(2552) in 23S rRNA + S-adenosyl-L-homocysteine + H(+). Its function is as follows. Specifically methylates the uridine in position 2552 of 23S rRNA at the 2'-O position of the ribose in the fully assembled 50S ribosomal subunit. The sequence is that of Ribosomal RNA large subunit methyltransferase E from Burkholderia pseudomallei (strain 1710b).